Reading from the N-terminus, the 207-residue chain is Mediator of RNA polymerase II transcription subunit 21 (207 aa).

The segment at 36-120 is disordered; it reads IPPPDVPDAA…APDSPRTFAS (85 aa). The span at 91 to 108 shows a compositional bias: low complexity; the sequence is GEGAQTPGPAAGAGADPN. Positions 146 to 194 form a coiled coil; it reads IDSSEAEQEKRIRELEGELRQVEEERELKMRELKRLRRTLENVLTAVET.

Belongs to the Mediator complex subunit 21 family. Component of the Mediator complex.

The protein localises to the nucleus. Component of the Mediator complex, a coactivator involved in the regulated transcription of nearly all RNA polymerase II-dependent genes. Mediator functions as a bridge to convey information from gene-specific regulatory proteins to the basal RNA polymerase II transcription machinery. Mediator is recruited to promoters by direct interactions with regulatory proteins and serves as a scaffold for the assembly of a functional preinitiation complex with RNA polymerase II and the general transcription factors. In Aspergillus fumigatus (strain ATCC MYA-4609 / CBS 101355 / FGSC A1100 / Af293) (Neosartorya fumigata), this protein is Mediator of RNA polymerase II transcription subunit 21 (srb7).